Here is a 141-residue protein sequence, read N- to C-terminus: uncharacterized protein (141 aa).

Helical transmembrane passes span 12–32 (GIAGCGAGGVVMAIASVTLVT) and 35–55 (PGRVLTGVAALGLILFASATW).

It localises to the cell membrane. This is an uncharacterized protein from Mycobacterium tuberculosis (strain CDC 1551 / Oshkosh).